The following is a 234-amino-acid chain: Carbohydrate deacetylase (234 aa).

Positions 60 and 123 each coordinate Mg(2+).

It belongs to the YdjC deacetylase family. The cofactor is Mg(2+).

Functionally, probably catalyzes the deacetylation of acetylated carbohydrates an important step in the degradation of oligosaccharides. This Bacillus anthracis protein is Carbohydrate deacetylase.